A 548-amino-acid polypeptide reads, in one-letter code: Formyltransferase/hydrolase complex Fhc subunit A (548 aa).

Zn(2+) is bound by residues His57, His59, and His227.

This sequence belongs to the metallo-dependent hydrolases superfamily. FwdA/FmdA family. In terms of assembly, octaheteromer. Part of the formyltransferase/hydrolase complex fhc; composed of FhcA, FhcB, FhcC and FhcD. Requires Zn(2+) as cofactor.

It localises to the cytoplasm. It catalyses the reaction N-formylmethanofuran + H2O = methanofuran + formate. Its pathway is one-carbon metabolism; formaldehyde degradation; formate from formaldehyde (H(4)MPT route): step 4/5. Functionally, involved in the transformation of 5-formyl tetrahydromethanopterin (5-formyl-H(4)MPT) to methanofuran (MFR) and formate via the formylmethanofuran (formyl-MFR). May be catalyze the hydrolysis of formylmethanofuran (formyl-MFR) to yield formate and MFR. The protein is Formyltransferase/hydrolase complex Fhc subunit A (fhcA) of Methylorubrum extorquens (strain ATCC 14718 / DSM 1338 / JCM 2805 / NCIMB 9133 / AM1) (Methylobacterium extorquens).